The following is a 466-amino-acid chain: Methylenetetrahydrofolate--tRNA-(uracil-5-)-methyltransferase TrmFO (466 aa).

FAD is bound at residue 14 to 19 (GGGLAG).

The protein belongs to the MnmG family. TrmFO subfamily. FAD is required as a cofactor.

The protein localises to the cytoplasm. It carries out the reaction uridine(54) in tRNA + (6R)-5,10-methylene-5,6,7,8-tetrahydrofolate + NADH + H(+) = 5-methyluridine(54) in tRNA + (6S)-5,6,7,8-tetrahydrofolate + NAD(+). The catalysed reaction is uridine(54) in tRNA + (6R)-5,10-methylene-5,6,7,8-tetrahydrofolate + NADPH + H(+) = 5-methyluridine(54) in tRNA + (6S)-5,6,7,8-tetrahydrofolate + NADP(+). Functionally, catalyzes the folate-dependent formation of 5-methyl-uridine at position 54 (M-5-U54) in all tRNAs. This is Methylenetetrahydrofolate--tRNA-(uracil-5-)-methyltransferase TrmFO from Brucella melitensis biotype 1 (strain ATCC 23456 / CCUG 17765 / NCTC 10094 / 16M).